Consider the following 440-residue polypeptide: Glucoside xylosyltransferase 1 (440 aa).

Over 1–6 (MRRYLR) the chain is Cytoplasmic. A helical; Signal-anchor for type II membrane protein membrane pass occupies residues 7 to 29 (VVVLCVACGFCSLLYAFSQLAVS). The Lumenal portion of the chain corresponds to 30–440 (LEEGTGGGGG…DRYARSPKEK (411 aa)). 3 N-linked (GlcNAc...) asparagine glycosylation sites follow: N173, N237, and N278.

It belongs to the glycosyltransferase 8 family.

The protein resides in the membrane. It catalyses the reaction 3-O-(beta-D-glucosyl)-L-seryl-[EGF-like domain protein] + UDP-alpha-D-xylose = 3-O-[alpha-D-xylosyl-(1-&gt;3)-beta-D-glucosyl]-L-seryl-[EGF-like domain protein] + UDP + H(+). In terms of biological role, glycosyltransferase which elongates the O-linked glucose attached to EGF-like repeats in the extracellular domain of Notch proteins by catalyzing the addition of xylose. The polypeptide is Glucoside xylosyltransferase 1 (GXYLT1) (Homo sapiens (Human)).